Here is a 135-residue protein sequence, read N- to C-terminus: Large ribosomal subunit protein uL16m (135 aa).

This sequence belongs to the universal ribosomal protein uL16 family.

Its subcellular location is the mitochondrion. The chain is Large ribosomal subunit protein uL16m (RPL16) from Marchantia polymorpha (Common liverwort).